Here is a 99-residue protein sequence, read N- to C-terminus: Aspartyl/glutamyl-tRNA(Asn/Gln) amidotransferase subunit C (99 aa).

It belongs to the GatC family. In terms of assembly, heterotrimer of A, B and C subunits.

It catalyses the reaction L-glutamyl-tRNA(Gln) + L-glutamine + ATP + H2O = L-glutaminyl-tRNA(Gln) + L-glutamate + ADP + phosphate + H(+). The enzyme catalyses L-aspartyl-tRNA(Asn) + L-glutamine + ATP + H2O = L-asparaginyl-tRNA(Asn) + L-glutamate + ADP + phosphate + 2 H(+). Its function is as follows. Allows the formation of correctly charged Asn-tRNA(Asn) or Gln-tRNA(Gln) through the transamidation of misacylated Asp-tRNA(Asn) or Glu-tRNA(Gln) in organisms which lack either or both of asparaginyl-tRNA or glutaminyl-tRNA synthetases. The reaction takes place in the presence of glutamine and ATP through an activated phospho-Asp-tRNA(Asn) or phospho-Glu-tRNA(Gln). This is Aspartyl/glutamyl-tRNA(Asn/Gln) amidotransferase subunit C from Methylibium petroleiphilum (strain ATCC BAA-1232 / LMG 22953 / PM1).